We begin with the raw amino-acid sequence, 122 residues long: uncharacterized protein (122 aa).

This is an uncharacterized protein from Acidianus sp. F28 (AFV-2).